We begin with the raw amino-acid sequence, 262 residues long: Nitrilase (262 aa).

The CN hydrolase domain maps to 2–237 (VKVAYVQMNP…EEVGVAEIDL (236 aa)). Glutamate 42 acts as the Proton acceptor in catalysis. Lysine 113 serves as the catalytic Proton donor. Cysteine 146 functions as the Nucleophile in the catalytic mechanism. Substrate is bound at residue 173 to 174 (VM).

Belongs to the carbon-nitrogen hydrolase superfamily. As to quaternary structure, homodimer.

It catalyses the reaction a nitrile + 2 H2O = a carboxylate + NH4(+). Its activity is regulated as follows. Enzymatic activity is inhibited in the presence of acetone, methanol and metal ions such as Ag(2+) and Hg(2+). Is also inhibited by various thiol reagents such as DTNB, p-chloromercuribenzoate, p-hydroxymercuribenzoate, iodacetamide and iodacetate. EDTA has no influence on activity. In terms of biological role, nitrilase that hydrolyzes preferentially aliphatic nitriles like malononitrile and fumaronitrile in vitro. These dinitriles are converted to the corresponding monoacid mononitriles, showing the enzyme is regioselective. Cannot hydrolyze compounds with a nitrile group bound to an aromatic ring or amino acid. Its biological role is unknown. The protein is Nitrilase of Pyrococcus abyssi (strain GE5 / Orsay).